A 137-amino-acid polypeptide reads, in one-letter code: Large ribosomal subunit protein uL11 (137 aa).

Belongs to the universal ribosomal protein uL11 family. As to quaternary structure, part of the ribosomal stalk of the 50S ribosomal subunit. Interacts with L10 and the large rRNA to form the base of the stalk. L10 forms an elongated spine to which L12 dimers bind in a sequential fashion forming a multimeric L10(L12)X complex. Post-translationally, one or more lysine residues are methylated.

Functionally, forms part of the ribosomal stalk which helps the ribosome interact with GTP-bound translation factors. The chain is Large ribosomal subunit protein uL11 from Mycoplasma pneumoniae (strain ATCC 29342 / M129 / Subtype 1) (Mycoplasmoides pneumoniae).